A 466-amino-acid polypeptide reads, in one-letter code: Uronate isomerase (466 aa).

This sequence belongs to the metallo-dependent hydrolases superfamily. Uronate isomerase family.

It catalyses the reaction D-glucuronate = D-fructuronate. The enzyme catalyses aldehydo-D-galacturonate = keto-D-tagaturonate. Its pathway is carbohydrate metabolism; pentose and glucuronate interconversion. This Brucella suis (strain ATCC 23445 / NCTC 10510) protein is Uronate isomerase.